Reading from the N-terminus, the 95-residue chain is Small ribosomal subunit protein uS14 (95 aa).

This sequence belongs to the universal ribosomal protein uS14 family. As to quaternary structure, part of the 30S ribosomal subunit. Contacts proteins S3 and S10.

In terms of biological role, binds 16S rRNA, required for the assembly of 30S particles and may also be responsible for determining the conformation of the 16S rRNA at the A site. This is Small ribosomal subunit protein uS14 (rpsN) from Carsonella ruddii.